Reading from the N-terminus, the 314-residue chain is Protoheme IX farnesyltransferase (314 aa).

8 helical membrane passes run isoleucine 36–phenylalanine 56, tryptophan 65–valine 85, serine 114–serine 134, tryptophan 135–tryptophan 155, tryptophan 179–isoleucine 199, isoleucine 237–isoleucine 257, phenylalanine 259–phenylalanine 279, and isoleucine 290–leucine 310.

Belongs to the UbiA prenyltransferase family. Protoheme IX farnesyltransferase subfamily. In terms of assembly, interacts with CtaA.

The protein resides in the cell membrane. The enzyme catalyses heme b + (2E,6E)-farnesyl diphosphate + H2O = Fe(II)-heme o + diphosphate. It participates in porphyrin-containing compound metabolism; heme O biosynthesis; heme O from protoheme: step 1/1. Functionally, converts heme B (protoheme IX) to heme O by substitution of the vinyl group on carbon 2 of heme B porphyrin ring with a hydroxyethyl farnesyl side group. The polypeptide is Protoheme IX farnesyltransferase (Oceanobacillus iheyensis (strain DSM 14371 / CIP 107618 / JCM 11309 / KCTC 3954 / HTE831)).